A 364-amino-acid polypeptide reads, in one-letter code: Aminomethyltransferase (364 aa).

It belongs to the GcvT family. As to quaternary structure, the glycine cleavage system is composed of four proteins: P, T, L and H.

It catalyses the reaction N(6)-[(R)-S(8)-aminomethyldihydrolipoyl]-L-lysyl-[protein] + (6S)-5,6,7,8-tetrahydrofolate = N(6)-[(R)-dihydrolipoyl]-L-lysyl-[protein] + (6R)-5,10-methylene-5,6,7,8-tetrahydrofolate + NH4(+). Functionally, the glycine cleavage system catalyzes the degradation of glycine. This chain is Aminomethyltransferase, found in Shewanella woodyi (strain ATCC 51908 / MS32).